A 137-amino-acid polypeptide reads, in one-letter code: Peptide methionine sulfoxide reductase MsrB (137 aa).

The MsrB domain occupies 7–129 (PEELKNGLSE…NSASLSFTDE (123 aa)). 4 residues coordinate Zn(2+): cysteine 46, cysteine 49, cysteine 95, and cysteine 98. The Nucleophile role is filled by cysteine 118.

Belongs to the MsrB Met sulfoxide reductase family. Zn(2+) serves as cofactor.

The catalysed reaction is L-methionyl-[protein] + [thioredoxin]-disulfide + H2O = L-methionyl-(R)-S-oxide-[protein] + [thioredoxin]-dithiol. The protein is Peptide methionine sulfoxide reductase MsrB of Klebsiella pneumoniae subsp. pneumoniae (strain ATCC 700721 / MGH 78578).